A 655-amino-acid polypeptide reads, in one-letter code: p-hydroxybenzoic acid efflux pump subunit AaeB (655 aa).

10 helical membrane passes run Phe-13–Leu-33, Trp-38–Pro-58, Leu-69–Ile-89, Leu-93–Val-113, Trp-121–Leu-141, Glu-152–Ile-172, Leu-370–Val-390, Phe-407–Pro-427, Gln-431–Val-451, and Leu-481–Leu-501.

The protein belongs to the aromatic acid exporter ArAE (TC 2.A.85) family.

Its subcellular location is the cell inner membrane. Functionally, forms an efflux pump with AaeA. Could function as a metabolic relief valve, allowing to eliminate certain compounds when they accumulate to high levels in the cell. The polypeptide is p-hydroxybenzoic acid efflux pump subunit AaeB (Escherichia fergusonii (strain ATCC 35469 / DSM 13698 / CCUG 18766 / IAM 14443 / JCM 21226 / LMG 7866 / NBRC 102419 / NCTC 12128 / CDC 0568-73)).